Here is a 430-residue protein sequence, read N- to C-terminus: Adenylosuccinate synthetase (430 aa).

GTP-binding positions include Gly-13–Lys-19 and Gly-41–Thr-43. The Proton acceptor role is filled by Asp-14. Mg(2+) is bound by residues Asp-14 and Gly-41. Residues Asp-14–Lys-17, Asn-39–His-42, Thr-130, Arg-144, Gln-225, Thr-240, and Arg-304 each bind IMP. His-42 functions as the Proton donor in the catalytic mechanism. Residue Ser-300–Arg-306 participates in substrate binding. Residues Arg-306, Lys-332 to Asp-334, and Ser-414 to Gly-416 each bind GTP.

It belongs to the adenylosuccinate synthetase family. In terms of assembly, homodimer. The cofactor is Mg(2+).

It is found in the cytoplasm. It catalyses the reaction IMP + L-aspartate + GTP = N(6)-(1,2-dicarboxyethyl)-AMP + GDP + phosphate + 2 H(+). The protein operates within purine metabolism; AMP biosynthesis via de novo pathway; AMP from IMP: step 1/2. Functionally, plays an important role in the de novo pathway of purine nucleotide biosynthesis. Catalyzes the first committed step in the biosynthesis of AMP from IMP. This Pseudomonas putida (strain ATCC 700007 / DSM 6899 / JCM 31910 / BCRC 17059 / LMG 24140 / F1) protein is Adenylosuccinate synthetase.